Consider the following 230-residue polypeptide: Dephospho-CoA kinase (230 aa).

One can recognise a DPCK domain in the interval 3–225 (IIGLTGGIAT…REGGAICPTP (223 aa)). 11–16 (ATGKST) contributes to the ATP binding site.

Belongs to the CoaE family.

It is found in the cytoplasm. The catalysed reaction is 3'-dephospho-CoA + ATP = ADP + CoA + H(+). Its pathway is cofactor biosynthesis; coenzyme A biosynthesis; CoA from (R)-pantothenate: step 5/5. Its function is as follows. Catalyzes the phosphorylation of the 3'-hydroxyl group of dephosphocoenzyme A to form coenzyme A. This is Dephospho-CoA kinase from Synechococcus sp. (strain JA-3-3Ab) (Cyanobacteria bacterium Yellowstone A-Prime).